Consider the following 123-residue polypeptide: Large ribosomal subunit protein uL24 (123 aa).

The protein belongs to the universal ribosomal protein uL24 family. Part of the 50S ribosomal subunit.

In terms of biological role, one of two assembly initiator proteins, it binds directly to the 5'-end of the 23S rRNA, where it nucleates assembly of the 50S subunit. Functionally, one of the proteins that surrounds the polypeptide exit tunnel on the outside of the subunit. The sequence is that of Large ribosomal subunit protein uL24 from Kineococcus radiotolerans (strain ATCC BAA-149 / DSM 14245 / SRS30216).